A 235-amino-acid chain; its full sequence is Phosphoribosylaminoimidazole-succinocarboxamide synthase (235 aa).

It belongs to the SAICAR synthetase family.

The enzyme catalyses 5-amino-1-(5-phospho-D-ribosyl)imidazole-4-carboxylate + L-aspartate + ATP = (2S)-2-[5-amino-1-(5-phospho-beta-D-ribosyl)imidazole-4-carboxamido]succinate + ADP + phosphate + 2 H(+). It functions in the pathway purine metabolism; IMP biosynthesis via de novo pathway; 5-amino-1-(5-phospho-D-ribosyl)imidazole-4-carboxamide from 5-amino-1-(5-phospho-D-ribosyl)imidazole-4-carboxylate: step 1/2. The protein is Phosphoribosylaminoimidazole-succinocarboxamide synthase of Chlorobium chlorochromatii (strain CaD3).